Consider the following 255-residue polypeptide: 5'-nucleotidase SurE (255 aa).

Residues Asp8, Asp9, Ser40, and Asn93 each contribute to the a divalent metal cation site.

Belongs to the SurE nucleotidase family. Requires a divalent metal cation as cofactor.

It localises to the cytoplasm. It catalyses the reaction a ribonucleoside 5'-phosphate + H2O = a ribonucleoside + phosphate. Nucleotidase that shows phosphatase activity on nucleoside 5'-monophosphates. In Rhodopseudomonas palustris (strain HaA2), this protein is 5'-nucleotidase SurE.